Here is a 457-residue protein sequence, read N- to C-terminus: Biphenyl dioxygenase subunit alpha (457 aa).

The Rieske domain maps to 58-174 (WLMLGHETHI…VETYKGLVFA (117 aa)). Residues C100, H102, C120, and H123 each coordinate [2Fe-2S] cluster. 2 residues coordinate Fe cation: H233 and H239.

It belongs to the bacterial ring-hydroxylating dioxygenase alpha subunit family. As to quaternary structure, heterohexamer consisting of three BphA subunits and three BphE subunits. A ferredoxin (BphF) and a ferredoxin reductase (BphG) must be present to obtain activity. The cofactor is [2Fe-2S] cluster. It depends on Fe cation as a cofactor.

It carries out the reaction biphenyl + NADH + O2 + H(+) = (2R,3S)-3-phenylcyclohexa-3,5-diene-1,2-diol + NAD(+). Its pathway is xenobiotic degradation; biphenyl degradation; 2-hydroxy-2,4-pentadienoate and benzoate from biphenyl: step 1/4. In Comamonas testosteroni (Pseudomonas testosteroni), this protein is Biphenyl dioxygenase subunit alpha (bphA).